The following is a 483-amino-acid chain: Dihydrolipoyllysine-residue acetyltransferase component of pyruvate dehydrogenase complex, mitochondrial (483 aa).

Residues 1–28 (MLSANMLRRMHHGVAVTRMLLVSNGKVQ) constitute a mitochondrion transit peptide. The 77-residue stretch at 53-129 (HTVINMPALS…PVGKPLAVTV (77 aa)) folds into the Lipoyl-binding domain. At Lys94 the chain carries N6-lipoyllysine. 2 disordered regions span residues 143 to 187 (IEDS…DRVF) and 234 to 254 (EAAA…APGD). A compositionally biased stretch (basic and acidic residues) spans 146-160 (SSAKEPSAKSGEEKS). Polar residues predominate over residues 161–178 (APSSEKQSKETSSPSNVS). Residues 187 to 224 (FASPLARKLAEEKDLDLSQIRGSGPNGRIIKVDIENFK) form the Peripheral subunit-binding (PSBD) domain. The span at 235–252 (AAAKATTPAASAADAAAP) shows a compositional bias: low complexity. Active-site residues include His456 and Asp460.

The protein belongs to the 2-oxoacid dehydrogenase family. (R)-lipoate is required as a cofactor.

The protein resides in the mitochondrion matrix. The enzyme catalyses N(6)-[(R)-dihydrolipoyl]-L-lysyl-[protein] + acetyl-CoA = N(6)-[(R)-S(8)-acetyldihydrolipoyl]-L-lysyl-[protein] + CoA. Functionally, the pyruvate dehydrogenase complex catalyzes the overall conversion of pyruvate to acetyl-CoA and CO(2). It contains multiple copies of three enzymatic components: pyruvate dehydrogenase (E1), dihydrolipoamide acetyltransferase (E2) and lipoamide dehydrogenase (E3). This Schizosaccharomyces pombe (strain 972 / ATCC 24843) (Fission yeast) protein is Dihydrolipoyllysine-residue acetyltransferase component of pyruvate dehydrogenase complex, mitochondrial.